Consider the following 429-residue polypeptide: Enolase (429 aa).

Residue Gln163 participates in (2R)-2-phosphoglycerate binding. Glu205 serves as the catalytic Proton donor. Asp242, Glu285, and Asp312 together coordinate Mg(2+). Residues Lys337, Arg366, Ser367, and Lys388 each contribute to the (2R)-2-phosphoglycerate site. Lys337 acts as the Proton acceptor in catalysis.

This sequence belongs to the enolase family. Component of the RNA degradosome, a multiprotein complex involved in RNA processing and mRNA degradation. Requires Mg(2+) as cofactor.

It localises to the cytoplasm. The protein resides in the secreted. The protein localises to the cell surface. It carries out the reaction (2R)-2-phosphoglycerate = phosphoenolpyruvate + H2O. The protein operates within carbohydrate degradation; glycolysis; pyruvate from D-glyceraldehyde 3-phosphate: step 4/5. Catalyzes the reversible conversion of 2-phosphoglycerate (2-PG) into phosphoenolpyruvate (PEP). It is essential for the degradation of carbohydrates via glycolysis. This is Enolase from Alkalilimnicola ehrlichii (strain ATCC BAA-1101 / DSM 17681 / MLHE-1).